The sequence spans 179 residues: MLRFKELYQKEIISNLQKEFSYKNKHEIPAIEKIVINMGVGEAIADSKVIDKAVNDLTLISGQKPFVTSARKSIATFKLRDGMKIGCKVTLRKDRMYDFLERLVIVALPRVKEFRGFSYKSFDGKGNFTFGLKEQIVFPEINYDKIDSIRGMDITIVTSAKTDKEGKSLLSGFNLPFYN.

The protein belongs to the universal ribosomal protein uL5 family. In terms of assembly, part of the 50S ribosomal subunit; part of the 5S rRNA/L5/L18/L25 subcomplex. Contacts the 5S rRNA and the P site tRNA. Forms a bridge to the 30S subunit in the 70S ribosome.

This is one of the proteins that bind and probably mediate the attachment of the 5S RNA into the large ribosomal subunit, where it forms part of the central protuberance. In the 70S ribosome it contacts protein S13 of the 30S subunit (bridge B1b), connecting the 2 subunits; this bridge is implicated in subunit movement. Contacts the P site tRNA; the 5S rRNA and some of its associated proteins might help stabilize positioning of ribosome-bound tRNAs. The protein is Large ribosomal subunit protein uL5 of Rickettsia bellii (strain OSU 85-389).